Here is a 488-residue protein sequence, read N- to C-terminus: Probable cytosol aminopeptidase (488 aa).

The Mn(2+) site is built by lysine 253 and aspartate 258. Residue lysine 265 is part of the active site. The Mn(2+) site is built by aspartate 276, aspartate 335, and glutamate 337. Residue arginine 339 is part of the active site.

It belongs to the peptidase M17 family. Mn(2+) serves as cofactor.

The protein resides in the cytoplasm. The enzyme catalyses Release of an N-terminal amino acid, Xaa-|-Yaa-, in which Xaa is preferably Leu, but may be other amino acids including Pro although not Arg or Lys, and Yaa may be Pro. Amino acid amides and methyl esters are also readily hydrolyzed, but rates on arylamides are exceedingly low.. It carries out the reaction Release of an N-terminal amino acid, preferentially leucine, but not glutamic or aspartic acids.. Functionally, presumably involved in the processing and regular turnover of intracellular proteins. Catalyzes the removal of unsubstituted N-terminal amino acids from various peptides. In Dinoroseobacter shibae (strain DSM 16493 / NCIMB 14021 / DFL 12), this protein is Probable cytosol aminopeptidase.